We begin with the raw amino-acid sequence, 442 residues long: UDP-glycosyltransferase 79B7 (442 aa).

UDP-alpha-D-glucose is bound by residues Ser260, 319–321 (VQQ), 336–344 (HCGPGTIWE), and 358–361 (LSDQ).

This sequence belongs to the UDP-glycosyltransferase family.

The chain is UDP-glycosyltransferase 79B7 (UGT79B7) from Arabidopsis thaliana (Mouse-ear cress).